Reading from the N-terminus, the 600-residue chain is Cytidine monophosphate-N-acetylneuraminic acid hydroxylase (600 aa).

Residues 9-107 (LSPVEVASLK…VEMDENNRLL (99 aa)) enclose the Rieske domain. Positions 49, 51, 70, and 73 each coordinate [2Fe-2S] cluster.

It belongs to the CMP-Neu5Ac hydroxylase family. It depends on [2Fe-2S] cluster as a cofactor.

It is found in the cytoplasm. The catalysed reaction is CMP-N-acetyl-beta-neuraminate + 2 Fe(II)-[cytochrome b5] + O2 + 2 H(+) = CMP-N-glycoloyl-beta-neuraminate + 2 Fe(III)-[cytochrome b5] + H2O. It participates in amino-sugar metabolism; N-acetylneuraminate metabolism. In terms of biological role, sialic acids are components of carbohydrate chains of glycoconjugates and are involved in cell-cell recognition and cell-pathogen interactions. Catalyzes the conversion of CMP-N-acetylneuraminic acid (CMP-Neu5Ac) into its hydroxylated derivative CMP-N-glycolylneuraminic acid (CMP-Neu5Gc), a sialic acid abundantly expressed at the surface of many cells. This is Cytidine monophosphate-N-acetylneuraminic acid hydroxylase (CMAH) from Pan paniscus (Pygmy chimpanzee).